The following is a 155-amino-acid chain: DNA gyrase inhibitor (155 aa).

The protein belongs to the DNA gyrase inhibitor family. In terms of assembly, interacts with DNA gyrase.

It localises to the cytoplasm. In terms of biological role, inhibits the supercoiling activity of DNA gyrase. Acts by inhibiting DNA gyrase at an early step, prior to (or at the step of) binding of DNA by the gyrase. It protects cells against toxins that target DNA gyrase, by inhibiting activity of these toxins and reducing the formation of lethal double-strand breaks in the cell. The chain is DNA gyrase inhibitor from Salmonella typhi.